The following is a 343-amino-acid chain: MSNTDKERAIAAALAQIEKSYGKGSVMKLGQRPNIDIEAVSTGSLGLDMALGIGGVPKGRIIEIFGPESSGKTTLTLHLIAEAQKKGGTCAFIDAEHALDPAYAKKLGVNIDELIISQPDTGEQALEITDTLIRSGGIDMVIIDSVAALVPKSEIEGEMGDAQMASQARLMSQALRKLTASISRTNCIAVFINQIRMKIGVMFGSPETTTGGNALKFYASVRIDIRRIGSIKDKEEVIGSQTKVKVVKNKVSPPFKTADFDIMYGSGISKEGEIIDLGVKLDIVEKSGSWFSYNNVRIGQGRENVKQYLKEHPQIANEIEKIIREKSSKITNMNLDQMEEEND.

66-73 is an ATP binding site; the sequence is GPESSGKT.

Belongs to the RecA family.

The protein localises to the cytoplasm. Its function is as follows. Can catalyze the hydrolysis of ATP in the presence of single-stranded DNA, the ATP-dependent uptake of single-stranded DNA by duplex DNA, and the ATP-dependent hybridization of homologous single-stranded DNAs. It interacts with LexA causing its activation and leading to its autocatalytic cleavage. The polypeptide is Protein RecA (Rickettsia canadensis (strain McKiel)).